Consider the following 170-residue polypeptide: MDLKQYVTIVPDYPKEGVQFKDITTLMDKGDVYRYATDQIVEYAKEKQIDLVVGPEARGFIIGCPVAYALGVGFAPVRKEGKLPREVIKVDYGLEYGKDVLTIHKDAIKPGQRVLITDDLLATGGTIEATIKLVEELGGVVAGIAFLIELSYLDGRNKLEDYDILTLMKY.

Belongs to the purine/pyrimidine phosphoribosyltransferase family. As to quaternary structure, homodimer.

It is found in the cytoplasm. The catalysed reaction is AMP + diphosphate = 5-phospho-alpha-D-ribose 1-diphosphate + adenine. The protein operates within purine metabolism; AMP biosynthesis via salvage pathway; AMP from adenine: step 1/1. In terms of biological role, catalyzes a salvage reaction resulting in the formation of AMP, that is energically less costly than de novo synthesis. In Bacillus subtilis (strain 168), this protein is Adenine phosphoribosyltransferase.